The primary structure comprises 279 residues: NADPH-dependent 7-cyano-7-deazaguanine reductase (279 aa).

86 to 88 is a substrate binding site; it reads IES. 88-89 is an NADPH binding site; the sequence is SK. The active-site Thioimide intermediate is the C187. The active-site Proton donor is the D194. 226–227 provides a ligand contact to substrate; sequence HE. Residue 255–256 coordinates NADPH; that stretch reads RG.

The protein belongs to the GTP cyclohydrolase I family. QueF type 2 subfamily. Homodimer.

Its subcellular location is the cytoplasm. It carries out the reaction 7-aminomethyl-7-carbaguanine + 2 NADP(+) = 7-cyano-7-deazaguanine + 2 NADPH + 3 H(+). The protein operates within tRNA modification; tRNA-queuosine biosynthesis. In terms of biological role, catalyzes the NADPH-dependent reduction of 7-cyano-7-deazaguanine (preQ0) to 7-aminomethyl-7-deazaguanine (preQ1). The sequence is that of NADPH-dependent 7-cyano-7-deazaguanine reductase from Actinobacillus pleuropneumoniae serotype 3 (strain JL03).